A 308-amino-acid chain; its full sequence is MDPMSNLPFTVAALYCFAPLPQYESLREPLAQLCCANGIKGTLLLAAEGINGTVAGSAGAIEKLIAHITAIPGLGEPELKYSHASEMPFHRMKVRLKREIVTMGVEGIDPLKSVGTYIAPKDWNALIADENTVVVDTRNDYEYAIGTFEGAIDPQTRTFREFPEWVKQNRDRLEGKKIAMFCTGGIRCEKATAFVKGLGFDDVYHLKGGILKYLEEVPREQSVWNGECFVFDERVAVGHGLAESDVELCRACRRPLTPQDKLSQFFEEGVSCAGCYAERTPEDRARYAERQKQVKLAEKRGANKHIGS.

The region spanning 128-222 (ADENTVVVDT…YLEEVPREQS (95 aa)) is the Rhodanese domain. Cys-182 functions as the Cysteine persulfide intermediate in the catalytic mechanism.

It belongs to the TrhO family.

The enzyme catalyses uridine(34) in tRNA + AH2 + O2 = 5-hydroxyuridine(34) in tRNA + A + H2O. Functionally, catalyzes oxygen-dependent 5-hydroxyuridine (ho5U) modification at position 34 in tRNAs. The polypeptide is tRNA uridine(34) hydroxylase (Brucella suis biovar 1 (strain 1330)).